The primary structure comprises 283 residues: Acetylglutamate kinase (283 aa).

Substrate-binding positions include 64–65 (GG), Arg86, and Asn178.

This sequence belongs to the acetylglutamate kinase family. ArgB subfamily.

It localises to the cytoplasm. The enzyme catalyses N-acetyl-L-glutamate + ATP = N-acetyl-L-glutamyl 5-phosphate + ADP. Its pathway is amino-acid biosynthesis; L-arginine biosynthesis; N(2)-acetyl-L-ornithine from L-glutamate: step 2/4. In terms of biological role, catalyzes the ATP-dependent phosphorylation of N-acetyl-L-glutamate. This Lactococcus lactis subsp. cremoris (strain MG1363) protein is Acetylglutamate kinase.